The chain runs to 526 residues: ATP synthase subunit alpha (526 aa).

An ATP-binding site is contributed by 171–178; that stretch reads GDRQTGKT.

The protein belongs to the ATPase alpha/beta chains family. As to quaternary structure, F-type ATPases have 2 components, CF(1) - the catalytic core - and CF(0) - the membrane proton channel. CF(1) has five subunits: alpha(3), beta(3), gamma(1), delta(1), epsilon(1). CF(0) has four main subunits: a(1), b(1), b'(1) and c(9-12).

It is found in the cell inner membrane. It catalyses the reaction ATP + H2O + 4 H(+)(in) = ADP + phosphate + 5 H(+)(out). Functionally, produces ATP from ADP in the presence of a proton gradient across the membrane. The alpha chain is a regulatory subunit. The chain is ATP synthase subunit alpha from Chlorobaculum tepidum (strain ATCC 49652 / DSM 12025 / NBRC 103806 / TLS) (Chlorobium tepidum).